The chain runs to 291 residues: Acetyl-coenzyme A carboxylase carboxyl transferase subunit beta (291 aa).

The CoA carboxyltransferase N-terminal domain occupies 34-291 (MWTKCSNCNS…LILHGVNKYE (258 aa)). Zn(2+)-binding residues include C38, C41, C57, and C60. A C4-type zinc finger spans residues 38 to 60 (CSNCNSMIYYEDLENNKYVCTKC).

It belongs to the AccD/PCCB family. Acetyl-CoA carboxylase is a heterohexamer composed of biotin carboxyl carrier protein (AccB), biotin carboxylase (AccC) and two subunits each of ACCase subunit alpha (AccA) and ACCase subunit beta (AccD). Zn(2+) is required as a cofactor.

The protein localises to the cytoplasm. It carries out the reaction N(6)-carboxybiotinyl-L-lysyl-[protein] + acetyl-CoA = N(6)-biotinyl-L-lysyl-[protein] + malonyl-CoA. It participates in lipid metabolism; malonyl-CoA biosynthesis; malonyl-CoA from acetyl-CoA: step 1/1. Component of the acetyl coenzyme A carboxylase (ACC) complex. Biotin carboxylase (BC) catalyzes the carboxylation of biotin on its carrier protein (BCCP) and then the CO(2) group is transferred by the transcarboxylase to acetyl-CoA to form malonyl-CoA. This chain is Acetyl-coenzyme A carboxylase carboxyl transferase subunit beta, found in Clostridium botulinum (strain Alaska E43 / Type E3).